A 303-amino-acid chain; its full sequence is Glutathione transport system permease protein GsiD (303 aa).

The next 6 helical transmembrane spans lie at 40–60 (AMTAALFVILLIVVAIFARWI), 105–125 (LAAGVFAVFIGAAIGTLLGLL), 144–164 (LFAFPGILLAIAVVAVLGSGI), 165–185 (ANVIIAVAIFSIPAFARLVRG), 222–242 (IVVFFTMRIGTSIISAASLSF), and 266–286 (VIAPHVAVFPALAIFLTVLAF). An ABC transmembrane type-1 domain is found at 101-290 (AQISLAAGVF…LTVLAFNLLG (190 aa)).

The protein belongs to the binding-protein-dependent transport system permease family. As to quaternary structure, the complex is composed of two ATP-binding proteins (GsiA), two transmembrane proteins (GsiC and GsiD) and a solute-binding protein (GsiB).

It localises to the cell inner membrane. Its function is as follows. Part of the ABC transporter complex GsiABCD involved in glutathione import. Probably responsible for the translocation of the substrate across the membrane. The polypeptide is Glutathione transport system permease protein GsiD (Escherichia coli O1:K1 / APEC).